The primary structure comprises 429 residues: Adenylosuccinate synthetase (429 aa).

GTP is bound by residues 15–21 (GDEGKGK) and 43–45 (GHV). Aspartate 16 serves as the catalytic Proton acceptor. Positions 16 and 43 each coordinate Mg(2+). IMP is bound by residues 16-19 (DEGK), 41-44 (NAGH), threonine 131, arginine 145, glutamine 225, threonine 240, and arginine 304. Histidine 44 acts as the Proton donor in catalysis. 300–306 (SNTKRPR) serves as a coordination point for substrate. GTP contacts are provided by residues arginine 306, 332–334 (LLD), and 414–416 (SVG).

This sequence belongs to the adenylosuccinate synthetase family. Homodimer. Requires Mg(2+) as cofactor.

The protein localises to the cytoplasm. It catalyses the reaction IMP + L-aspartate + GTP = N(6)-(1,2-dicarboxyethyl)-AMP + GDP + phosphate + 2 H(+). It functions in the pathway purine metabolism; AMP biosynthesis via de novo pathway; AMP from IMP: step 1/2. Plays an important role in the de novo pathway of purine nucleotide biosynthesis. Catalyzes the first committed step in the biosynthesis of AMP from IMP. The protein is Adenylosuccinate synthetase of Mesoplasma florum (strain ATCC 33453 / NBRC 100688 / NCTC 11704 / L1) (Acholeplasma florum).